Consider the following 626-residue polypeptide: Protein ALEX (626 aa).

Disordered stretches follow at residues 1–29 (MMAR…LEPM), 173–223 (TTAH…AAHP), 236–473 (AAPG…APRS), and 556–612 (AASV…NNSR). Composition is skewed to polar residues over residues 186 to 195 (KSTAAASSRQ) and 255 to 270 (GSTT…QSRL). Basic and acidic residues predominate over residues 281-312 (QIRESEQRDPQLRRKQQRWKEPLMPRREEKYP). Residues 337 to 346 (QPILTPGQPQ) are compositionally biased toward low complexity. Residues 366–399 (IPTPGQPLPPQPIPTPGRPLTPQPIPTPGRPLTP) are compositionally biased toward pro residues. The segment covering 416–435 (RLLRPGQPMSPQLRQTQGLP) has biased composition (low complexity). Pro residues predominate over residues 436-445 (LPQPLLPPGQ). The segment covering 570–579 (ALSRSRRYPW) has biased composition (basic residues). The segment covering 600-611 (RRNAVSSSTNNS) has biased composition (polar residues).

Belongs to the ALEX family. As to quaternary structure, interacts with the N-terminal region of the XLas isoforms of guanine nucleotide-binding protein G(s) subunit alpha.

It localises to the cell membrane. It is found in the cell projection. Its subcellular location is the ruffle. In terms of biological role, may inhibit the adenylyl cyclase-stimulating activity of guanine nucleotide-binding protein G(s) subunit alpha which is produced from the same locus in a different open reading frame. This Homo sapiens (Human) protein is Protein ALEX.